Reading from the N-terminus, the 514-residue chain is Protein farnesyltransferase subunit beta (514 aa).

Residues 1-13 (MRHHTKNLRRRAI) show a composition bias toward basic residues. The interval 1–56 (MRHHTKNLRRRAIFLRTTPRGNMDSSSSVATSTSSSSNHRLVRSSEGSPSAGGDDI) is disordered. Over residues 25–39 (SSSSVATSTSSSSNH) the composition is skewed to low complexity. PFTB repeat units lie at residues 180–221 (AESL…AVVG), 231–272 (RRAL…SLLN), 293–334 (FTGL…SLLG), 346–388 (IERL…PLIE), and 410–454 (REGL…SSAQ). (2E,6E)-farnesyl diphosphate is bound by residues 319–322 (HGAY) and 367–370 (RTNK). Residues D373 and C375 each contribute to the Zn(2+) site. 376 to 379 (YSHW) is a binding site for (2E,6E)-farnesyl diphosphate. H442 contributes to the Zn(2+) binding site.

The protein belongs to the protein prenyltransferase subunit beta family. In terms of assembly, heterodimer of an alpha and a beta subunit. Interacts with RAS1 and RAS2. Requires Zn(2+) as cofactor. Highly expressed in mycelium, conidium, conidial germination, early formed appressorium and the late infection hypha.

It localises to the cytoplasm. The catalysed reaction is L-cysteinyl-[protein] + (2E,6E)-farnesyl diphosphate = S-(2E,6E)-farnesyl-L-cysteinyl-[protein] + diphosphate. Catalyzes the transfer of a farnesyl moiety from farnesyl diphosphate to a cysteine at the fourth position from the C-terminus of several proteins having the C-terminal sequence Cys-aliphatic-aliphatic-X. The beta subunit is responsible for peptide-binding. The protein is Protein farnesyltransferase subunit beta (RAM1) of Pyricularia oryzae (strain 70-15 / ATCC MYA-4617 / FGSC 8958) (Rice blast fungus).